The primary structure comprises 1088 residues: V-type proton ATPase catalytic subunit A (1088 aa).

ATP is bound at residue 257-264; it reads GAFGCGKT. Residues 485-662 form the DOD-type homing endonuclease domain; that stretch reads LLGTWAGIGN…LVKIAHSLGI (178 aa).

This sequence belongs to the ATPase alpha/beta chains family. In terms of assembly, V-ATPase is a heteromultimeric enzyme composed of a peripheral catalytic V1 complex (components A to H) attached to an integral membrane V0 proton pore complex (components: a, c, c', c'', d, e, f and VOA1). In terms of processing, this protein undergoes a protein self splicing that involves a post-translational excision of the VDE intervening region (intein) followed by peptide ligation.

The protein resides in the vacuole membrane. It catalyses the reaction ATP + H2O + 4 H(+)(in) = ADP + phosphate + 5 H(+)(out). In terms of biological role, catalytic subunit of the V1 complex of vacuolar(H+)-ATPase (V-ATPase), a multisubunit enzyme composed of a peripheral complex (V1) that hydrolyzes ATP and a membrane integral complex (V0) that translocates protons. V-ATPase is responsible for acidifying and maintaining the pH of intracellular compartments. Functionally, VDE is an endonuclease that can cleave at a site present in a VMA1 allele that lacks the derived endonuclease segment of the open reading frame; cleavage at this site only occurs during meiosis and initiates 'homing', a genetic event that converts a VMA1 allele lacking VDE into one that contains it. The polypeptide is V-type proton ATPase catalytic subunit A (VMA1) (Candida tropicalis (Yeast)).